Here is a 181-residue protein sequence, read N- to C-terminus: Ribulose bisphosphate carboxylase small subunit 2B, chloroplastic (181 aa).

A chloroplast-targeting transit peptide spans 1–54 (MASSMFSSTAVVTSPAQATMVAPFTGLKSSASFPVTRKANNDITSITSNGGRVS).

It belongs to the RuBisCO small chain family. In terms of assembly, heterohexadecamer of 8 large and 8 small subunits.

Its subcellular location is the plastid. It is found in the chloroplast. RuBisCO catalyzes two reactions: the carboxylation of D-ribulose 1,5-bisphosphate, the primary event in carbon dioxide fixation, as well as the oxidative fragmentation of the pentose substrate. Both reactions occur simultaneously and in competition at the same active site. Although the small subunit is not catalytic it is essential for maximal activity. The chain is Ribulose bisphosphate carboxylase small subunit 2B, chloroplastic (RBCS-2B) from Arabidopsis thaliana (Mouse-ear cress).